Consider the following 352-residue polypeptide: Histidinol-phosphate aminotransferase (352 aa).

An N6-(pyridoxal phosphate)lysine modification is found at Lys-211.

Belongs to the class-II pyridoxal-phosphate-dependent aminotransferase family. Histidinol-phosphate aminotransferase subfamily. Homodimer. The cofactor is pyridoxal 5'-phosphate.

It catalyses the reaction L-histidinol phosphate + 2-oxoglutarate = 3-(imidazol-4-yl)-2-oxopropyl phosphate + L-glutamate. It functions in the pathway amino-acid biosynthesis; L-histidine biosynthesis; L-histidine from 5-phospho-alpha-D-ribose 1-diphosphate: step 7/9. In Haemophilus influenzae (strain PittGG), this protein is Histidinol-phosphate aminotransferase.